A 338-amino-acid polypeptide reads, in one-letter code: uncharacterized protein (338 aa).

This is an uncharacterized protein from Acidianus filamentous virus 2 (isolate Italy/Pozzuoli) (AFV-2).